A 406-amino-acid polypeptide reads, in one-letter code: Argininosuccinate synthase (406 aa).

Residues Ala11–Ser19 and Ala38 contribute to the ATP site. L-citrulline contacts are provided by Tyr91 and Ser96. Residue Gly121 participates in ATP binding. L-aspartate-binding residues include Thr123, Asn127, and Asp128. An L-citrulline-binding site is contributed by Asn127. Arg131, Ser181, Ser190, Glu266, and Tyr278 together coordinate L-citrulline.

It belongs to the argininosuccinate synthase family. Type 1 subfamily. Homotetramer.

It is found in the cytoplasm. It catalyses the reaction L-citrulline + L-aspartate + ATP = 2-(N(omega)-L-arginino)succinate + AMP + diphosphate + H(+). It functions in the pathway amino-acid biosynthesis; L-arginine biosynthesis; L-arginine from L-ornithine and carbamoyl phosphate: step 2/3. This chain is Argininosuccinate synthase, found in Campylobacter jejuni subsp. jejuni serotype O:23/36 (strain 81-176).